The sequence spans 211 residues: Ribonuclease P protein component 3 (211 aa).

This sequence belongs to the eukaryotic/archaeal RNase P protein component 3 family. As to quaternary structure, consists of a catalytic RNA component and at least 4-5 protein subunits.

Its subcellular location is the cytoplasm. It carries out the reaction Endonucleolytic cleavage of RNA, removing 5'-extranucleotides from tRNA precursor.. In terms of biological role, part of ribonuclease P, a protein complex that generates mature tRNA molecules by cleaving their 5'-ends. The chain is Ribonuclease P protein component 3 from Aeropyrum pernix (strain ATCC 700893 / DSM 11879 / JCM 9820 / NBRC 100138 / K1).